A 507-amino-acid chain; its full sequence is Probable D-lactate dehydrogenase, mitochondrial (507 aa).

The transit peptide at 1–52 (MARLLRSATWELFPWRGYCSQKAKGELCRDFVEALKAVVGGSHVSTAAVVRE) directs the protein to the mitochondrion. K36 bears the N6-acetyllysine mark. Residues 62–265 (RCEPPDAVVW…TATTLRLHPA (204 aa)) form the FAD-binding PCMH-type domain. K315 is subject to N6-acetyllysine. K358 carries the N6-acetyllysine; alternate modification. K358 is subject to N6-succinyllysine; alternate. 2 positions are modified to N6-acetyllysine: K445 and K472.

The protein belongs to the FAD-binding oxidoreductase/transferase type 4 family. Interacts with CSRP3. FAD serves as cofactor. As to expression, expressed moderately in heart and liver and at lower levels in skeletal muscle and kidney.

Its subcellular location is the mitochondrion. The enzyme catalyses (R)-lactate + 2 Fe(III)-[cytochrome c] = 2 Fe(II)-[cytochrome c] + pyruvate + 2 H(+). In terms of biological role, involved in D-lactate, but not L-lactate catabolic process. The sequence is that of Probable D-lactate dehydrogenase, mitochondrial from Homo sapiens (Human).